The primary structure comprises 131 residues: Large ribosomal subunit protein bL17 (131 aa).

This sequence belongs to the bacterial ribosomal protein bL17 family. In terms of assembly, part of the 50S ribosomal subunit. Contacts protein L32.

The polypeptide is Large ribosomal subunit protein bL17 (Bordetella petrii (strain ATCC BAA-461 / DSM 12804 / CCUG 43448)).